The chain runs to 379 residues: MTINVNTNVSAMTAQRYLTKATGELNTSMERLSSGNRINSAKDDAAGLQISNRLTAQSRGLDVAMRNANDGISIAQTAEGAMNESTSILQRMRDLALQSANGTNSASERQALNEESVALQDELNRIAETTSFGGRKLLNGSFGEASFQIGSSSGEAIIMGLTSVRADDFRMGGQSFIAEQPKTKEWGVPPTARDLKFEFTKKDGEAVVLDIIAKDGDDIEELATYINGQTDLFKASVDQEGKLQIFVAEPNIEGNFNISGGLATELGLNGGPGVKTTVQDIDITSVGGSQNAVGIIDAALKYVDSQRADLGAKQNRLSHSISNLSNIQENVEASKSRIKDTDFAKETTQLTKSQILQQAGTSILAQAKQLPNSAISLLQ.

Coiled-coil stretches lie at residues Asn104–Thr129 and Gln314–Thr341.

It belongs to the bacterial flagellin family. In terms of assembly, heteromer of multiple flagellin subunits including FlaA, FlaB, FlaC, FlaD and FlaE.

The protein localises to the secreted. It is found in the bacterial flagellum. Functionally, flagellin is the subunit protein which polymerizes to form the filaments of bacterial flagella. FlaA is required to form a core or scaffold into which the other flagellins are inserted to provide structural integrity. Essential for flagellar synthesis and motility; important for full virulence. The protein is Flagellin A (flaA) of Vibrio cholerae serotype O1 (strain ATCC 39541 / Classical Ogawa 395 / O395).